We begin with the raw amino-acid sequence, 484 residues long: MHIAFAASECVPFSKTGGLADVVGAVPRALAALGHKVSVYTPLYRNTKLENPKTAVRSITVPFDDQYRFCSIVDGGMIDGVQFYFVDYPAYFDRDALYGTPIGDYHDNAERFALFSRAVIEGSKILGVPDIFHCHDWQSALIPVLLRTLYAEDPAFDHAKIVFTIHNMGYQGLFPGEILPLLMLPWDLFTLTKMEFYGKVNFLKGALVYADFVTTVSRRYALEIQTAEYGFGLEGVLRGRSGTVAGILNGVDYSEWSPETDRFIAAKFSADSLAAKAQDKADLLREFGLPETKLPVVGIVSRFAAQKGFDLIQQVGDRLAREEAIFVVLGSGDKTYEDLMRRLSKQYPNRFAVRVAYDNALAHKIEAGSDMFLMPSRYEPCGLNQIYSLRYGTVPIVRATGGLDDTIENWDPITNRGTGFKFVEYSGEDMLDTVRKALELFKDKTAWQKLMRNGMARDFSWNTAAKEYVRVYEKAKQVRAPMPV.

Position 15 (K15) interacts with ADP-alpha-D-glucose.

This sequence belongs to the glycosyltransferase 1 family. Bacterial/plant glycogen synthase subfamily.

It carries out the reaction [(1-&gt;4)-alpha-D-glucosyl](n) + ADP-alpha-D-glucose = [(1-&gt;4)-alpha-D-glucosyl](n+1) + ADP + H(+). The protein operates within glycan biosynthesis; glycogen biosynthesis. Functionally, synthesizes alpha-1,4-glucan chains using ADP-glucose. The chain is Glycogen synthase from Koribacter versatilis (strain Ellin345).